A 199-amino-acid chain; its full sequence is Proteasome subunit beta 2 (199 aa).

Positions 1–6 are cleaved as a propeptide — removed in mature form; by autocatalysis; it reads MEKKTG. Thr7 (nucleophile) is an active-site residue.

It belongs to the peptidase T1B family. The 20S proteasome core is composed of 14 alpha and 14 beta subunits that assemble into four stacked heptameric rings, resulting in a barrel-shaped structure. The two inner rings, each composed of seven catalytic beta subunits, are sandwiched by two outer rings, each composed of seven alpha subunits. The catalytic chamber with the active sites is on the inside of the barrel. Has a gated structure, the ends of the cylinder being occluded by the N-termini of the alpha-subunits. Is capped at one or both ends by the proteasome regulatory ATPase, PAN.

It is found in the cytoplasm. The catalysed reaction is Cleavage of peptide bonds with very broad specificity.. The formation of the proteasomal ATPase PAN-20S proteasome complex, via the docking of the C-termini of PAN into the intersubunit pockets in the alpha-rings, triggers opening of the gate for substrate entry. Interconversion between the open-gate and close-gate conformations leads to a dynamic regulation of the 20S proteasome proteolysis activity. Its function is as follows. Component of the proteasome core, a large protease complex with broad specificity involved in protein degradation. This chain is Proteasome subunit beta 2, found in Thermococcus kodakarensis (strain ATCC BAA-918 / JCM 12380 / KOD1) (Pyrococcus kodakaraensis (strain KOD1)).